The chain runs to 91 residues: Large ribosomal subunit protein bL27 (91 aa).

The segment at Met1–Arg25 is disordered.

It belongs to the bacterial ribosomal protein bL27 family.

In Corynebacterium kroppenstedtii (strain DSM 44385 / JCM 11950 / CIP 105744 / CCUG 35717), this protein is Large ribosomal subunit protein bL27.